Here is a 274-residue protein sequence, read N- to C-terminus: 4-deoxy-L-threo-5-hexosulose-uronate ketol-isomerase (274 aa).

Zn(2+)-binding residues include His-192, His-194, Glu-199, and His-241.

This sequence belongs to the KduI family. Zn(2+) is required as a cofactor.

The catalysed reaction is 5-dehydro-4-deoxy-D-glucuronate = 3-deoxy-D-glycero-2,5-hexodiulosonate. It functions in the pathway glycan metabolism; pectin degradation; 2-dehydro-3-deoxy-D-gluconate from pectin: step 4/5. In terms of biological role, catalyzes the isomerization of 5-dehydro-4-deoxy-D-glucuronate to 3-deoxy-D-glycero-2,5-hexodiulosonate. The polypeptide is 4-deoxy-L-threo-5-hexosulose-uronate ketol-isomerase (Agrobacterium fabrum (strain C58 / ATCC 33970) (Agrobacterium tumefaciens (strain C58))).